The following is a 740-amino-acid chain: Folic acid synthesis protein fol1 (740 aa).

DHNA stretches follow at residues 39 to 160 and 161 to 280; these read DLIH…REID and DQFF…SCFS. An HPPK region spans residues 291–449; the sequence is IDNEAVYISL…EKIVDHDIKP (159 aa). In terms of domain architecture, Pterin-binding spans 471–730; that stretch reads TYIMAILNLT…DVYEMYKISK (260 aa). The segment at 473–740 is DHPS; that stretch reads IMAILNLTPD…MSDAIWKEIY (268 aa). Asparagine 478 lines the Mg(2+) pocket. Residues threonine 517, aspartate 552, asparagine 571, aspartate 643, lysine 683, and 718-720 contribute to the (7,8-dihydropterin-6-yl)methyl diphosphate site; that span reads RVH.

The protein in the N-terminal section; belongs to the DHNA family. In the central section; belongs to the HPPK family. It in the C-terminal section; belongs to the DHPS family. Requires Mg(2+) as cofactor.

It carries out the reaction 7,8-dihydroneopterin = 6-hydroxymethyl-7,8-dihydropterin + glycolaldehyde. The enzyme catalyses 6-hydroxymethyl-7,8-dihydropterin + ATP = (7,8-dihydropterin-6-yl)methyl diphosphate + AMP + H(+). The catalysed reaction is (7,8-dihydropterin-6-yl)methyl diphosphate + 4-aminobenzoate = 7,8-dihydropteroate + diphosphate. The protein operates within cofactor biosynthesis; tetrahydrofolate biosynthesis; 2-amino-4-hydroxy-6-hydroxymethyl-7,8-dihydropteridine diphosphate from 7,8-dihydroneopterin triphosphate: step 3/4. It participates in cofactor biosynthesis; tetrahydrofolate biosynthesis; 2-amino-4-hydroxy-6-hydroxymethyl-7,8-dihydropteridine diphosphate from 7,8-dihydroneopterin triphosphate: step 4/4. Its pathway is cofactor biosynthesis; tetrahydrofolate biosynthesis; 7,8-dihydrofolate from 2-amino-4-hydroxy-6-hydroxymethyl-7,8-dihydropteridine diphosphate and 4-aminobenzoate: step 1/2. In terms of biological role, catalyzes three sequential steps of tetrahydrofolate biosynthesis. The polypeptide is Folic acid synthesis protein fol1 (fol1) (Pneumocystis carinii).